The sequence spans 418 residues: UDP-N-acetylglucosamine 1-carboxyvinyltransferase (418 aa).

22-23 (KN) contributes to the phosphoenolpyruvate binding site. Arg-91 provides a ligand contact to UDP-N-acetyl-alpha-D-glucosamine. Cys-115 (proton donor) is an active-site residue. At Cys-115 the chain carries 2-(S-cysteinyl)pyruvic acid O-phosphothioketal. UDP-N-acetyl-alpha-D-glucosamine-binding residues include Asp-305 and Ile-327.

This sequence belongs to the EPSP synthase family. MurA subfamily.

It localises to the cytoplasm. The catalysed reaction is phosphoenolpyruvate + UDP-N-acetyl-alpha-D-glucosamine = UDP-N-acetyl-3-O-(1-carboxyvinyl)-alpha-D-glucosamine + phosphate. Its pathway is cell wall biogenesis; peptidoglycan biosynthesis. Cell wall formation. Adds enolpyruvyl to UDP-N-acetylglucosamine. The polypeptide is UDP-N-acetylglucosamine 1-carboxyvinyltransferase (Aeromonas hydrophila subsp. hydrophila (strain ATCC 7966 / DSM 30187 / BCRC 13018 / CCUG 14551 / JCM 1027 / KCTC 2358 / NCIMB 9240 / NCTC 8049)).